The chain runs to 319 residues: Sliding-clamp-loader large subunit (319 aa).

Residues 12-15 (EQKY), Ile24, 53-58 (GTGKTT), and Arg205 contribute to the ATP site.

This sequence belongs to the Tevenvirinae sliding-clamp-loader large subunit family. In terms of assembly, the sliding-clamp-loader consists of 4 large subunits and 1 small subunit. Interacts with the sliding clamp; this interaction allows the sliding-clamp-loader to open the sliding clamp. Part of the replicase complex that includes the DNA polymerase, the polymerase clamp, the clamp loader complex, the single-stranded DNA binding protein, the primase, the helicase and the helicase assembly factor.

In terms of biological role, forms the sliding-clamp-loader together with the small subunit. Functions as an ATPase enzyme. The clamp loader holds the clamp in an open conformation and places it onto the DNA. 4 ATP molecules must bind to the sliding-clamp-loader before the latter can open the sliding clamp. ATP hydrolysis triggers the detachment of the sliding clamp from the sliding-clamp-loader, freeing the sliding clamp to track along DNA. The chain is Sliding-clamp-loader large subunit (44) from Enterobacteria phage T4 (Bacteriophage T4).